Here is a 198-residue protein sequence, read N- to C-terminus: Large ribosomal subunit protein eL18 (198 aa).

Positions 157-198 (RHFGASGVPGSHSKPYATNRGKETKRGRRTGRSYKRKAFRHV) are disordered. Over residues 179-198 (ETKRGRRTGRSYKRKAFRHV) the composition is skewed to basic residues.

This sequence belongs to the eukaryotic ribosomal protein eL18 family.

The protein localises to the cytoplasm. This is Large ribosomal subunit protein eL18 (RPL18-A) from Leishmania major.